Reading from the N-terminus, the 396-residue chain is Acetate kinase (396 aa).

N8 is a Mg(2+) binding site. K15 is an ATP binding site. R89 provides a ligand contact to substrate. The Proton donor/acceptor role is filled by D146. ATP is bound by residues 206-210 (HIGNG), 283-285 (DMR), and 331-335 (GMGEN). Residue E383 coordinates Mg(2+).

This sequence belongs to the acetokinase family. In terms of assembly, homodimer. Mg(2+) is required as a cofactor. It depends on Mn(2+) as a cofactor.

The protein localises to the cytoplasm. The catalysed reaction is acetate + ATP = acetyl phosphate + ADP. It participates in metabolic intermediate biosynthesis; acetyl-CoA biosynthesis; acetyl-CoA from acetate: step 1/2. Catalyzes the formation of acetyl phosphate from acetate and ATP. Can also catalyze the reverse reaction. This is Acetate kinase from Streptococcus uberis (strain ATCC BAA-854 / 0140J).